Consider the following 448-residue polypeptide: Exodeoxyribonuclease 7 large subunit (448 aa).

This sequence belongs to the XseA family. As to quaternary structure, heterooligomer composed of large and small subunits.

The protein localises to the cytoplasm. It carries out the reaction Exonucleolytic cleavage in either 5'- to 3'- or 3'- to 5'-direction to yield nucleoside 5'-phosphates.. Its function is as follows. Bidirectionally degrades single-stranded DNA into large acid-insoluble oligonucleotides, which are then degraded further into small acid-soluble oligonucleotides. The chain is Exodeoxyribonuclease 7 large subunit from Geobacillus kaustophilus (strain HTA426).